Reading from the N-terminus, the 332-residue chain is Glycerol-3-phosphate dehydrogenase [NAD(P)+] (332 aa).

NADPH-binding residues include Ser-10, Trp-11, His-31, Arg-32, and Lys-105. Residues Lys-105, Gly-136, and Ser-138 each contribute to the sn-glycerol 3-phosphate site. Ala-140 serves as a coordination point for NADPH. Sn-glycerol 3-phosphate-binding residues include Lys-191, Asp-244, Ser-254, Arg-255, and Asn-256. Lys-191 (proton acceptor) is an active-site residue. Residue Arg-255 coordinates NADPH. 2 residues coordinate NADPH: Val-279 and Glu-281.

Belongs to the NAD-dependent glycerol-3-phosphate dehydrogenase family.

It is found in the cytoplasm. The enzyme catalyses sn-glycerol 3-phosphate + NAD(+) = dihydroxyacetone phosphate + NADH + H(+). It carries out the reaction sn-glycerol 3-phosphate + NADP(+) = dihydroxyacetone phosphate + NADPH + H(+). It functions in the pathway membrane lipid metabolism; glycerophospholipid metabolism. Its function is as follows. Catalyzes the reduction of the glycolytic intermediate dihydroxyacetone phosphate (DHAP) to sn-glycerol 3-phosphate (G3P), the key precursor for phospholipid synthesis. In Prosthecochloris aestuarii (strain DSM 271 / SK 413), this protein is Glycerol-3-phosphate dehydrogenase [NAD(P)+].